Reading from the N-terminus, the 332-residue chain is Tryptophan--tRNA ligase (332 aa).

Residues 11-13 and 19-20 contribute to the ATP site; these read QPS and GN. A 'HIGH' region motif is present at residues 12 to 20; sequence PSGELTIGN. Asp-135 is an L-tryptophan binding site. Residues 147–149, Val-186, and 195–199 contribute to the ATP site; these read GQD and KMSKS. The short motif at 195–199 is the 'KMSKS' region element; sequence KMSKS.

It belongs to the class-I aminoacyl-tRNA synthetase family. As to quaternary structure, homodimer.

The protein resides in the cytoplasm. The enzyme catalyses tRNA(Trp) + L-tryptophan + ATP = L-tryptophyl-tRNA(Trp) + AMP + diphosphate + H(+). Catalyzes the attachment of tryptophan to tRNA(Trp). This is Tryptophan--tRNA ligase from Shewanella oneidensis (strain ATCC 700550 / JCM 31522 / CIP 106686 / LMG 19005 / NCIMB 14063 / MR-1).